The chain runs to 127 residues: Fluoride-specific ion channel FluC (127 aa).

4 helical membrane-spanning segments follow: residues 4–24 (LLLAVFIGGGTGSVARWLLSM), 35–55 (LGTLTANLIGAFIIGMGFAWF), 71–91 (TGFCGGLTTFSTFSAEVVFLL), and 103–123 (VFVNLLGSFAMTALAFWLFSA). The Na(+) site is built by G75 and T78.

It belongs to the fluoride channel Fluc/FEX (TC 1.A.43) family.

The protein localises to the cell inner membrane. It carries out the reaction fluoride(in) = fluoride(out). Na(+) is not transported, but it plays an essential structural role and its presence is essential for fluoride channel function. Functionally, fluoride-specific ion channel. Important for reducing fluoride concentration in the cell, thus reducing its toxicity. This is Fluoride-specific ion channel FluC from Escherichia coli (strain ATCC 8739 / DSM 1576 / NBRC 3972 / NCIMB 8545 / WDCM 00012 / Crooks).